A 425-amino-acid chain; its full sequence is UDP-N-acetylglucosamine 1-carboxyvinyltransferase (425 aa).

Position 23–24 (23–24 (KN)) interacts with phosphoenolpyruvate. Arg100 contributes to the UDP-N-acetyl-alpha-D-glucosamine binding site. Cys124 (proton donor) is an active-site residue. The residue at position 124 (Cys124) is a 2-(S-cysteinyl)pyruvic acid O-phosphothioketal. Asp313 and Ile335 together coordinate UDP-N-acetyl-alpha-D-glucosamine.

The protein belongs to the EPSP synthase family. MurA subfamily.

It is found in the cytoplasm. It carries out the reaction phosphoenolpyruvate + UDP-N-acetyl-alpha-D-glucosamine = UDP-N-acetyl-3-O-(1-carboxyvinyl)-alpha-D-glucosamine + phosphate. Its pathway is cell wall biogenesis; peptidoglycan biosynthesis. Its function is as follows. Cell wall formation. Adds enolpyruvyl to UDP-N-acetylglucosamine. The sequence is that of UDP-N-acetylglucosamine 1-carboxyvinyltransferase from Wolbachia sp. subsp. Drosophila simulans (strain wRi).